Consider the following 833-residue polypeptide: MSPEKQPQEEDEVDSVLLSASKILNSSEGVKESGCSGTEYGCIAESENQIQPQSALKVLQHQLESFQALRMQTLQNVSMVQSEISEILNKSIIEVENPQFGSEKNLAFGARIEKDLPTENQEGNLSMEKSRHFKDSKTLHSVEEKLSGDSVNSLSQNINVPSQMHFEDTLTLRTSTDNLSSNIIIHPSENSDILKNYNNFYHFLPTAPQNVMSQADTVILDKSKITVPFLKHGFCENLDDICHSIEQMKEELQKSHDREVALANELQTLKTDPNVQSNDKYDLSPIHQEKMNFIKEENMDGNLNEDIKSKRISELEALVNKLLPFRETVSKFHVNFCRKCKKLSKSEIHRGKRNEKNNKEIPITGKNITDLKFHSRVPRYTLSFLDQTKHEMKDKERQPFLVKQGSIIFENEKTSKVNSVTEQCVAKIQYLQNYLKESVQIQKKVTELENENLNLKSKMKPLIFTTQSLIQKVETYEKQLKNLVEEKSTIQSKLSKTEEDSKECLKELKKIIGKYNVLQGQNKTLEEKNIQLSLEKQQMMEAFDQLKSKEHKTQSDMAIVNNENNLMSIEMEAMKTNILLIQDEKEMLEKKTHQLLKEKSSLENELKENQLEVMQLKEKERLAKTEQETLLQIIETVKDEKLNLETTLQESAAARQIMEREIENIQTYQSTAEENFLQEIKNAKSEASIYKNSLSEIGKECEMLSKMVMETKTDNQILKEELKKHSQENVKFENSISRLTEDKILLENYVRSIENERDTLEFEMRNLQREYLNLSDKICSQHNDPSKSTYISRREKFHFDNYIHEDISSPRSRPLASDLKGYLKVKDRTLKHH.

The stretch at 431–778 forms a coiled coil; that stretch reads LQNYLKESVQ…REYLNLSDKI (348 aa).

Its subcellular location is the nucleus. The polypeptide is Coiled-coil domain-containing protein 110 (CCDC110) (Macaca fascicularis (Crab-eating macaque)).